The primary structure comprises 123 residues: cAMP-responsive element-binding protein-like 2 (123 aa).

The disordered stretch occupies residues 1-24 (MDDSKVVGGKVKKPGKRGRKPAKI). The segment covering 10 to 21 (KVKKPGKRGRKP) has biased composition (basic residues). The 64-residue stretch at 23-86 (KIDLKAKLER…MAMDQGKIPS (64 aa)) folds into the bZIP domain. The tract at residues 29-60 (KLERSRQSARECRARKKLRYQYLEELVSSRER) is basic motif. Residues 62–69 (ICALREEL) form a leucine-zipper region. The segment at 92 to 123 (LTGEEQSKPQQNSSRHPKAGKTDANTNSLVGN) is disordered. Polar residues predominate over residues 114 to 123 (DANTNSLVGN).

This sequence belongs to the bZIP family. ATF subfamily. In terms of assembly, interacts with CREB1; regulates CREB1 phosphorylation, stability and transcriptional activity. Phosphorylated by AMPK. Widely expressed with higher expression in adipose tissue, skeletal muscle, and liver (at protein level).

The protein resides in the nucleus. Probable regulator of CREB1 transcriptional activity which is involved in adipose cells differentiation. May also play a regulatory role in the cell cycle. The chain is cAMP-responsive element-binding protein-like 2 (Crebl2) from Mus musculus (Mouse).